The sequence spans 527 residues: Bacillolysin (527 aa).

A signal peptide spans 1–28 (MKKSYLATSLTLSIAVGVSGFTSVPAFA). Positions 29 to 223 (KTKIDYHKQW…VINKYNMLDH (195 aa)) are cleaved as a propeptide — activation peptide. Residues aspartate 276, aspartate 278, and aspartate 354 each contribute to the Ca(2+) site. A Zn(2+)-binding site is contributed by histidine 358. Glutamate 359 is a catalytic residue. Zn(2+) contacts are provided by histidine 362 and glutamate 382. The Ca(2+) site is built by aspartate 393, asparagine 394, aspartate 396, glutamate 401, tyrosine 404, threonine 405, and aspartate 411. Histidine 442 acts as the Proton donor in catalysis.

The protein belongs to the peptidase M4 family. It depends on Ca(2+) as a cofactor. Zn(2+) serves as cofactor.

It localises to the secreted. The catalysed reaction is Similar, but not identical, to that of thermolysin.. Its function is as follows. Extracellular zinc metalloprotease. The sequence is that of Bacillolysin (npr) from Brevibacillus brevis (Bacillus brevis).